The chain runs to 437 residues: Ribosomal protein uS12 methylthiotransferase RimO (437 aa).

Residues Lys3–Pro118 form the MTTase N-terminal domain. 6 residues coordinate [4Fe-4S] cluster: Cys12, Cys48, Cys81, Cys157, Cys161, and Cys164. In terms of domain architecture, Radical SAM core spans Asn143–Glu370. Positions Glu373 to Val437 constitute a TRAM domain.

Belongs to the methylthiotransferase family. RimO subfamily. [4Fe-4S] cluster is required as a cofactor.

It localises to the cytoplasm. It carries out the reaction L-aspartate(89)-[ribosomal protein uS12]-hydrogen + (sulfur carrier)-SH + AH2 + 2 S-adenosyl-L-methionine = 3-methylsulfanyl-L-aspartate(89)-[ribosomal protein uS12]-hydrogen + (sulfur carrier)-H + 5'-deoxyadenosine + L-methionine + A + S-adenosyl-L-homocysteine + 2 H(+). Its function is as follows. Catalyzes the methylthiolation of an aspartic acid residue of ribosomal protein uS12. The polypeptide is Ribosomal protein uS12 methylthiotransferase RimO (Leptospira interrogans serogroup Icterohaemorrhagiae serovar copenhageni (strain Fiocruz L1-130)).